Here is a 560-residue protein sequence, read N- to C-terminus: Eukaryotic translation initiation factor 3 subunit D-1 (560 aa).

The interval V98 to S166 is disordered. Basic residues predominate over residues K100–N121. At T128 the chain carries Phosphothreonine. Residues G147 to H156 are compositionally biased toward basic residues. The segment at E291–P305 is RNA gate.

Belongs to the eIF-3 subunit D family. As to quaternary structure, component of the eukaryotic translation initiation factor 3 (eIF-3) complex. The eIF-3 complex interacts with pix.

It localises to the cytoplasm. Its function is as follows. mRNA cap-binding component of the eukaryotic translation initiation factor 3 (eIF-3) complex, which is involved in protein synthesis of a specialized repertoire of mRNAs and, together with other initiation factors, stimulates binding of mRNA and methionyl-tRNAi to the 40S ribosome. The eIF-3 complex specifically targets and initiates translation of a subset of mRNAs involved in cell proliferation. In the eIF-3 complex, eif3d specifically recognizes and binds the 7-methylguanosine cap of a subset of mRNAs. In Drosophila melanogaster (Fruit fly), this protein is Eukaryotic translation initiation factor 3 subunit D-1.